A 500-amino-acid polypeptide reads, in one-letter code: Aspartyl/glutamyl-tRNA(Asn/Gln) amidotransferase subunit B (500 aa).

The protein belongs to the GatB/GatE family. GatB subfamily. Heterotrimer of A, B and C subunits.

It carries out the reaction L-glutamyl-tRNA(Gln) + L-glutamine + ATP + H2O = L-glutaminyl-tRNA(Gln) + L-glutamate + ADP + phosphate + H(+). It catalyses the reaction L-aspartyl-tRNA(Asn) + L-glutamine + ATP + H2O = L-asparaginyl-tRNA(Asn) + L-glutamate + ADP + phosphate + 2 H(+). Allows the formation of correctly charged Asn-tRNA(Asn) or Gln-tRNA(Gln) through the transamidation of misacylated Asp-tRNA(Asn) or Glu-tRNA(Gln) in organisms which lack either or both of asparaginyl-tRNA or glutaminyl-tRNA synthetases. The reaction takes place in the presence of glutamine and ATP through an activated phospho-Asp-tRNA(Asn) or phospho-Glu-tRNA(Gln). In Clavibacter michiganensis subsp. michiganensis (strain NCPPB 382), this protein is Aspartyl/glutamyl-tRNA(Asn/Gln) amidotransferase subunit B.